We begin with the raw amino-acid sequence, 511 residues long: Myrosinase 4 (511 aa).

The N-terminal stretch at 1–23 is a signal peptide; that stretch reads MAIPKAHYSLAVLVLLFVVVSSS. 3 disulfide bridges follow: Cys-31/Cys-450, Cys-39/Cys-445, and Cys-230/Cys-233. Asn-46 and Asn-53 each carry an N-linked (GlcNAc...) asparagine glycan. Residues Gln-64, His-165, and 210–211 each bind a beta-D-glucoside; that span reads NQ. A beta-D-glucoside contacts are provided by Tyr-351 and Glu-418. The active-site Nucleophile is Glu-418. A glycan (N-linked (GlcNAc...) asparagine) is linked at Asn-428. A beta-D-glucoside-binding positions include Trp-467, 474–475, and Phe-483; that span reads EF. Asn-489 carries an N-linked (GlcNAc...) asparagine glycan.

Belongs to the glycosyl hydrolase 1 family. As to expression, specifically expressed in roots.

The enzyme catalyses a thioglucoside + H2O = a sugar + a thiol.. The catalysed reaction is Hydrolysis of terminal, non-reducing beta-D-glucosyl residues with release of beta-D-glucose.. Functionally, hydrolyzes sinigrin and, with lower efficiency, p-nitrophenyl beta-D-glucoside. This is Myrosinase 4 from Arabidopsis thaliana (Mouse-ear cress).